Here is a 420-residue protein sequence, read N- to C-terminus: Serine hydroxymethyltransferase (420 aa).

(6S)-5,6,7,8-tetrahydrofolate contacts are provided by residues leucine 121 and 125–127 (GHL). Lysine 230 carries the post-translational modification N6-(pyridoxal phosphate)lysine. Residues glutamate 246 and 354-356 (SPF) contribute to the (6S)-5,6,7,8-tetrahydrofolate site.

Belongs to the SHMT family. In terms of assembly, homodimer. It depends on pyridoxal 5'-phosphate as a cofactor.

Its subcellular location is the cytoplasm. The catalysed reaction is (6R)-5,10-methylene-5,6,7,8-tetrahydrofolate + glycine + H2O = (6S)-5,6,7,8-tetrahydrofolate + L-serine. It participates in one-carbon metabolism; tetrahydrofolate interconversion. The protein operates within amino-acid biosynthesis; glycine biosynthesis; glycine from L-serine: step 1/1. In terms of biological role, catalyzes the reversible interconversion of serine and glycine with tetrahydrofolate (THF) serving as the one-carbon carrier. This reaction serves as the major source of one-carbon groups required for the biosynthesis of purines, thymidylate, methionine, and other important biomolecules. Also exhibits THF-independent aldolase activity toward beta-hydroxyamino acids, producing glycine and aldehydes, via a retro-aldol mechanism. This Rickettsia typhi (strain ATCC VR-144 / Wilmington) protein is Serine hydroxymethyltransferase.